Consider the following 112-residue polypeptide: UPF0102 protein THEYE_A1950 (112 aa).

Belongs to the UPF0102 family.

In Thermodesulfovibrio yellowstonii (strain ATCC 51303 / DSM 11347 / YP87), this protein is UPF0102 protein THEYE_A1950.